Here is a 191-residue protein sequence, read N- to C-terminus: Uridylate kinase (191 aa).

Glycine 12 to threonine 17 is an ATP binding site. The tract at residues serine 33–valine 63 is NMP. A ribonucleoside 5'-phosphate contacts are provided by residues arginine 39, lysine 61 to valine 63, glycine 91 to arginine 94, and glutamine 98. Residues histidine 128–aspartate 138 are LID. ATP is bound at residue arginine 129. A ribonucleoside 5'-phosphate is bound by residues arginine 135 and arginine 146. Glutamine 174 is a binding site for ATP.

This sequence belongs to the adenylate kinase family. UMP-CMP kinase subfamily. In terms of assembly, monomer. Mg(2+) serves as cofactor.

The protein resides in the cytoplasm. It is found in the nucleus. The enzyme catalyses UMP + ATP = UDP + ADP. Catalyzes the phosphorylation of pyrimidine nucleoside monophosphates at the expense of ATP. Plays an important role in de novo pyrimidine nucleotide biosynthesis. Has preference for UMP and dUMP as phosphate acceptors, but can also use CMP, dCMP and AMP. The polypeptide is Uridylate kinase (Schizosaccharomyces pombe (strain 972 / ATCC 24843) (Fission yeast)).